Reading from the N-terminus, the 1360-residue chain is NAD(+) hydrolase sarm1 (1360 aa).

Positions 27–52 (RITGGPGSISTTSASAITAPSTMSQT) are disordered. Residues 34–48 (SISTTSASAITAPST) show a composition bias toward low complexity. 2 SAM domains span residues 690-754 (WSVE…LKRM) and 760-828 (KDTA…NSLP). The TIR domain maps to 837–981 (KTLDVFVSYR…KLERFLRGEK (145 aa)). NAD(+) contacts are provided by residues 846–847 (RR) and Glu-876. Glu-919 is a catalytic residue. A compositionally biased stretch (polar residues) spans 997 to 1010 (VSYQRMHSNDSDYQ). Disordered regions lie at residues 997–1026 (VSYQRMHSNDSDYQSGGAGAGSGAGTGGGG), 1046–1085 (GQANHQANRYRQSPSPARQRGSTSQLSGYSRAPSKRSQIL), 1121–1148 (SAAGLGHGSGSGMGSGYRSHSVDGLLDQ), 1192–1217 (NDSVTRRDKHTLSPPGNVQQHRKSRS), and 1249–1343 (IPMT…GNNK). A compositionally biased stretch (gly residues) spans 1012–1026 (GGAGAGSGAGTGGGG). Positions 1046-1073 (GQANHQANRYRQSPSPARQRGSTSQLSG) are enriched in polar residues. The span at 1125–1135 (LGHGSGSGMGS) shows a compositional bias: gly residues. The span at 1321–1335 (SLTSNKTSNSSLGSN) shows a compositional bias: low complexity.

Belongs to the SARM1 family. Widely expressed in larval brains and adult brains.

The protein resides in the cytoplasm. Its subcellular location is the cell projection. It localises to the axon. The enzyme catalyses NAD(+) + H2O = ADP-D-ribose + nicotinamide + H(+). The catalysed reaction is NAD(+) = cyclic ADP-beta-D-ribose + nicotinamide + H(+). In terms of biological role, NAD(+) hydrolase, which plays a key role in axonal degeneration following injury by regulating NAD(+) metabolism. Acts as a negative regulator of MYD88- and TRIF-dependent toll-like receptor signaling pathway by promoting Wallerian degeneration, an injury-induced form of programmed subcellular death which involves degeneration of an axon distal to the injury site. Wallerian degeneration is triggered by NAD(+) depletion: in response to injury, it is activated and catalyzes cleavage of NAD(+) into ADP-D-ribose (ADPR), cyclic ADPR (cADPR) and nicotinamide; NAD(+) cleavage promoting axon destruction. Involved in the down-regulation of the tracheal immune response to Gram-negative bacteria. This is likely by mediating Tollo signaling in the tracheal epithelium. This chain is NAD(+) hydrolase sarm1, found in Drosophila melanogaster (Fruit fly).